Here is a 389-residue protein sequence, read N- to C-terminus: Lipid-A-disaccharide synthase (389 aa).

It belongs to the LpxB family.

The enzyme catalyses a lipid X + a UDP-2-N,3-O-bis[(3R)-3-hydroxyacyl]-alpha-D-glucosamine = a lipid A disaccharide + UDP + H(+). The protein operates within bacterial outer membrane biogenesis; LPS lipid A biosynthesis. Its function is as follows. Condensation of UDP-2,3-diacylglucosamine and 2,3-diacylglucosamine-1-phosphate to form lipid A disaccharide, a precursor of lipid A, a phosphorylated glycolipid that anchors the lipopolysaccharide to the outer membrane of the cell. This Histophilus somni (strain 2336) (Haemophilus somnus) protein is Lipid-A-disaccharide synthase.